Consider the following 115-residue polypeptide: Large ribosomal subunit protein bL20 (115 aa).

Belongs to the bacterial ribosomal protein bL20 family.

Functionally, binds directly to 23S ribosomal RNA and is necessary for the in vitro assembly process of the 50S ribosomal subunit. It is not involved in the protein synthesizing functions of that subunit. This is Large ribosomal subunit protein bL20 from Synechococcus sp. (strain CC9902).